Reading from the N-terminus, the 179-residue chain is Ferric nitrobindin-like protein (179 aa).

The short motif at 17-23 (GRWEGLG) is the GXWXGXG element.

The protein belongs to the nitrobindin family.

The chain is Ferric nitrobindin-like protein from Thermobifida fusca (strain YX).